The sequence spans 451 residues: Tryptophan--tRNA ligase (451 aa).

ATP contacts are provided by residues 10–12 and 18–19; these read TTT and GN. The 'HIGH' region motif lies at 11–19; sequence TTGTPHLGN. Asp143 is a binding site for L-tryptophan. ATP-binding positions include 155–157, Leu195, and 202–206; these read GRD and KMSKS. A 'KMSKS' region motif is present at residues 202 to 206; that stretch reads KMSKS.

It belongs to the class-I aminoacyl-tRNA synthetase family. In terms of assembly, homodimer.

Its subcellular location is the cytoplasm. It catalyses the reaction tRNA(Trp) + L-tryptophan + ATP = L-tryptophyl-tRNA(Trp) + AMP + diphosphate + H(+). Its function is as follows. Catalyzes the attachment of tryptophan to tRNA(Trp). The protein is Tryptophan--tRNA ligase of Bordetella pertussis (strain Tohama I / ATCC BAA-589 / NCTC 13251).